Here is a 423-residue protein sequence, read N- to C-terminus: Histidine--tRNA ligase (423 aa).

This sequence belongs to the class-II aminoacyl-tRNA synthetase family. In terms of assembly, homodimer.

It is found in the cytoplasm. It carries out the reaction tRNA(His) + L-histidine + ATP = L-histidyl-tRNA(His) + AMP + diphosphate + H(+). This chain is Histidine--tRNA ligase, found in Bacillus cytotoxicus (strain DSM 22905 / CIP 110041 / 391-98 / NVH 391-98).